Here is a 562-residue protein sequence, read N- to C-terminus: Malate synthase (562 aa).

Residue arginine 177 is the Proton acceptor of the active site. Aspartate 463 serves as the catalytic Proton donor. Residues 560–562 (SRL) carry the Microbody targeting signal motif.

This sequence belongs to the malate synthase family.

The protein resides in the glyoxysome. It catalyses the reaction glyoxylate + acetyl-CoA + H2O = (S)-malate + CoA + H(+). It participates in carbohydrate metabolism; glyoxylate cycle; (S)-malate from isocitrate: step 2/2. In terms of biological role, does not seem to be essential for lipid utilization and gluconeogenesis in seedlings. This Arabidopsis thaliana (Mouse-ear cress) protein is Malate synthase.